The primary structure comprises 198 residues: Superoxide dismutase [Mn], mitochondrial (198 aa).

Mn(2+) is bound at residue histidine 26. At tyrosine 34 the chain carries 3'-nitrotyrosine. Lysine 44 and lysine 51 each carry N6-acetyllysine; alternate. Lysine 44 and lysine 51 each carry N6-succinyllysine; alternate. Mn(2+) is bound at residue histidine 74. Lysine 90 carries the post-translational modification N6-acetyllysine. N6-acetyllysine; alternate is present on residues lysine 98 and lysine 106. An N6-succinyllysine; alternate mark is found at lysine 98 and lysine 106. Positions 159 and 163 each coordinate Mn(2+). Lysine 178 is subject to N6-acetyllysine.

This sequence belongs to the iron/manganese superoxide dismutase family. In terms of assembly, homotetramer. It depends on Mn(2+) as a cofactor. Post-translationally, nitrated under oxidative stress. Nitration coupled with oxidation inhibits the catalytic activity. Acetylation at Lys-98 decreases enzymatic activity. Deacetylated by SIRT3 upon exposure to ionizing radiations or after long fasting. In terms of processing, polyubiquitinated; leading to proteasomal degradation. Deubiquitinated by USP36 which increases protein stability.

The protein localises to the mitochondrion matrix. It carries out the reaction 2 superoxide + 2 H(+) = H2O2 + O2. Destroys superoxide anion radicals which are normally produced within the cells and which are toxic to biological systems. This Pan troglodytes (Chimpanzee) protein is Superoxide dismutase [Mn], mitochondrial (SOD2).